The primary structure comprises 329 residues: CDP-6-deoxy-L-threo-D-glycero-4-hexulose-3-dehydrase reductase (329 aa).

The 2Fe-2S ferredoxin-type domain occupies 2–93 (SLNVKLHPSG…ELDVNYYPEL (92 aa)). [2Fe-2S] cluster contacts are provided by Cys-37, Cys-42, Cys-45, and Cys-75. One can recognise an FAD-binding FR-type domain in the interval 98–197 (KKTYPCKLDS…EGPQGTFFVR (100 aa)).

In terms of assembly, monomer.

It participates in nucleotide-sugar biosynthesis; CDP-ascarylose biosynthesis. The protein operates within bacterial outer membrane biogenesis; lipopolysaccharide biosynthesis. Participates in the conversion of CDP-6-deoxy-D-glycero-L-threo-4-hexulose to 3,6-dideoxy-D-glycero-D-glycero-4-hexulose together with CDP-6-deoxy-D-glycero-L-threo-4-hexulose-3-dehydrase (E1) in two consecutive steps. The detailed mechanism of E3 is not yet resolved. This Yersinia pseudotuberculosis serotype I (strain IP32953) protein is CDP-6-deoxy-L-threo-D-glycero-4-hexulose-3-dehydrase reductase (ascD).